The following is a 695-amino-acid chain: DNA ligase (695 aa).

Residue 30 to 34 (DADFD) participates in NAD(+) binding. A disordered region spans residues 52-71 (TGASPTEEVAPAPPTSSPFR). Residues 81 to 82 (SL) and glutamate 106 contribute to the NAD(+) site. Lysine 108 (N6-AMP-lysine intermediate) is an active-site residue. NAD(+)-binding residues include arginine 129, glutamate 169, lysine 285, and lysine 309. Residues cysteine 403, cysteine 406, cysteine 422, and cysteine 428 each coordinate Zn(2+). Residues 599–688 (VDSALLEGLT…APSSGDDAST (90 aa)) enclose the BRCT domain. The disordered stretch occupies residues 676-695 (ENGAPSSGDDASTSADSVDD). Residues 679–695 (APSSGDDASTSADSVDD) are compositionally biased toward low complexity.

Belongs to the NAD-dependent DNA ligase family. LigA subfamily. Requires Mg(2+) as cofactor. Mn(2+) is required as a cofactor.

It catalyses the reaction NAD(+) + (deoxyribonucleotide)n-3'-hydroxyl + 5'-phospho-(deoxyribonucleotide)m = (deoxyribonucleotide)n+m + AMP + beta-nicotinamide D-nucleotide.. DNA ligase that catalyzes the formation of phosphodiester linkages between 5'-phosphoryl and 3'-hydroxyl groups in double-stranded DNA using NAD as a coenzyme and as the energy source for the reaction. It is essential for DNA replication and repair of damaged DNA. The polypeptide is DNA ligase (Corynebacterium jeikeium (strain K411)).